An 83-amino-acid chain; its full sequence is Sec-independent protein translocase protein TatA (83 aa).

The helical transmembrane segment at 1–21 (MGSLSPWHWAILAVVVIVLFG) threads the bilayer. A disordered region spans residues 48–83 (NENKAEASIETPTPVQSQRVDPSAASGQDSTEARPA). Residues 57–77 (ETPTPVQSQRVDPSAASGQDS) are compositionally biased toward polar residues.

The protein belongs to the TatA/E family. As to quaternary structure, the Tat system comprises two distinct complexes: a TatABC complex, containing multiple copies of TatA, TatB and TatC subunits, and a separate TatA complex, containing only TatA subunits. Substrates initially bind to the TatABC complex, which probably triggers association of the separate TatA complex to form the active translocon.

It localises to the cell membrane. Part of the twin-arginine translocation (Tat) system that transports large folded proteins containing a characteristic twin-arginine motif in their signal peptide across membranes. TatA could form the protein-conducting channel of the Tat system. The polypeptide is Sec-independent protein translocase protein TatA (Mycobacterium bovis (strain BCG / Pasteur 1173P2)).